Here is a 381-residue protein sequence, read N- to C-terminus: Cytochrome b (381 aa).

Transmembrane regions (helical) follow at residues 34-54, 78-99, 114-134, and 179-199; these read FGSHLGLCLIIQILTGLFLAM, WLIRNIHANGASLFFICVYLHI, WNIGVILLFLLMATAFVGYVL, and FFAFHFLLPFLILALTVIHLL. Positions 84 and 98 each coordinate heme b. Heme b-binding residues include His-183 and His-197. Residue His-202 coordinates a ubiquinone. 4 helical membrane-spanning segments follow: residues 227 to 247, 289 to 309, 321 to 341, and 348 to 368; these read YKDLLGFFVMIFFLAALALFM, LGGVLALLFSIFILMLVPLLH, MTQILFWFLVANSIILTWIGG, and FIMVGQIASISYFSLFLIIMP.

This sequence belongs to the cytochrome b family. In terms of assembly, the cytochrome bc1 complex contains 3 respiratory subunits (MT-CYB, CYC1 and UQCRFS1), 2 core proteins (UQCRC1 and UQCRC2) and probably 6 low-molecular weight proteins. Heme b is required as a cofactor.

The protein localises to the mitochondrion inner membrane. In terms of biological role, component of the ubiquinol-cytochrome c reductase complex (complex III or cytochrome b-c1 complex) that is part of the mitochondrial respiratory chain. The b-c1 complex mediates electron transfer from ubiquinol to cytochrome c. Contributes to the generation of a proton gradient across the mitochondrial membrane that is then used for ATP synthesis. In Carcharhinus porosus (Smalltail shark), this protein is Cytochrome b (mt-cyb).